Consider the following 220-residue polypeptide: Peptide methionine sulfoxide reductase MsrA (220 aa).

The active site involves cysteine 52.

This sequence belongs to the MsrA Met sulfoxide reductase family.

The catalysed reaction is L-methionyl-[protein] + [thioredoxin]-disulfide + H2O = L-methionyl-(S)-S-oxide-[protein] + [thioredoxin]-dithiol. The enzyme catalyses [thioredoxin]-disulfide + L-methionine + H2O = L-methionine (S)-S-oxide + [thioredoxin]-dithiol. Its function is as follows. Has an important function as a repair enzyme for proteins that have been inactivated by oxidation. Catalyzes the reversible oxidation-reduction of methionine sulfoxide in proteins to methionine. In Corynebacterium diphtheriae (strain ATCC 700971 / NCTC 13129 / Biotype gravis), this protein is Peptide methionine sulfoxide reductase MsrA.